The chain runs to 151 residues: uncharacterized protein (151 aa).

In terms of domain architecture, N-acetyltransferase spans 3–151 (IKIDDLTGRQ…PNSVFMTKKL (149 aa)).

The protein belongs to the acetyltransferase family.

This is an uncharacterized protein from Bacillus subtilis (strain 168).